The sequence spans 4830 residues: Siderophore peptide synthetase fer3 (4830 aa).

The interval 197–623 is adenylation 1; sequence LDQAEKFPDR…LGRMNAEQVK (427 aa). The Carrier 1 domain occupies 751-833; that stretch reads ANEDPVTQAL…DLIPLLSDTT (83 aa). O-(pantetheine 4'-phosphoryl)serine is present on S788. The segment at 879 to 1317 is condensation 1; it reads QKIFPTTATQ…HSLMREPETT (439 aa). The tract at residues 1358 to 1781 is adenylation 2; it reads FENKAATEPE…IGRRDDLVKL (424 aa). The Carrier 2 domain maps to 1929-2005; sequence GEDGDLQCQV…MLIRGLATKT (77 aa). Position 1966 is an O-(pantetheine 4'-phosphoryl)serine (S1966). The condensation 2 stretch occupies residues 2048-2503; that stretch reads IPCSTLQEGM…LLDQVVSLLT (456 aa). The interval 2573–2977 is adenylation 3; the sequence is AGTPETACIN…LGRRDEQEKI (405 aa). The region spanning 3122–3198 is the Carrier 3 domain; the sequence is RPLSSLEREI…DIAAELSDSK (77 aa). The residue at position 3159 (S3159) is an O-(pantetheine 4'-phosphoryl)serine. Residues 3232-3621 are condensation 3; the sequence is KVLPCLPSQE…RDRDELRISA (390 aa). The Carrier 4 domain maps to 3685–3760; that stretch reads TAAEEQIRDL…GLSKLLDQRQ (76 aa). At S3720 the chain carries O-(pantetheine 4'-phosphoryl)serine. Residues 3779–4199 form a condensation 4 region; it reads RYKATPLQAG…GVQIKAGASD (421 aa). The 77-residue stretch at 4264-4340 folds into the Carrier 5 domain; that stretch reads SLSTAEQDIV…RLTVATETRS (77 aa). At S4301 the chain carries O-(pantetheine 4'-phosphoryl)serine. A condensation 5 region spans residues 4381-4708; it reads VLPLLTGQQQ…DLVSRAEHQQ (328 aa).

The protein belongs to the NRP synthetase family.

It participates in siderophore biosynthesis. In terms of biological role, nonribosomal peptide synthetase; part of the gene cluster that mediates the biosynthesis of siderophore ferrichrome A which is contributing to organismal virulence. The first step of ferrichrome A biosynthesis is performed by the HMG-CoA synthase hcs1 which catalyzes the generation of HMG-CoA and CoA using acetoacetyl-CoA and acetyl-CoA as substrates. The enoyl-CoA isomerase/hydratase fer4 then catalyzes the conversion of hcs1-produced HMG-CoA to methylglutaconyl-CoA. The acyltransferase fer5 then fuses the fer4-generated methylglutaconyl-CoA with sid1-generated hydroxyornithine to yield methylglutaconyl hydroxyornithine. Methylglutaconyl hydroxyornithine is then available for use by the NRPS fer3 to generate ferrichrome A. This is Siderophore peptide synthetase fer3 from Mycosarcoma maydis (Corn smut fungus).